Reading from the N-terminus, the 330-residue chain is Probable NAD(P)H-dependent D-xylose reductase xyl1 (330 aa).

Y50 functions as the Proton donor in the catalytic mechanism. H112 serves as a coordination point for substrate. Residues 166–167 (SN), 215–224 (SSFGPLSFLE), and 271–281 (KSNNPTRLAQN) each bind NAD(+).

Belongs to the aldo/keto reductase family.

The catalysed reaction is xylitol + NAD(+) = D-xylose + NADH + H(+). It carries out the reaction xylitol + NADP(+) = D-xylose + NADPH + H(+). It participates in carbohydrate metabolism; D-xylose degradation. Its function is as follows. Catalyzes the initial reaction in the xylose utilization pathway by reducing D-xylose into xylitol. Xylose is a major component of hemicelluloses such as xylan. Most fungi utilize D-xylose via three enzymatic reactions, xylose reductase (XR), xylitol dehydrogenase (XDH), and xylulokinase, to form xylulose 5-phosphate, which enters pentose phosphate pathway. In Aspergillus clavatus (strain ATCC 1007 / CBS 513.65 / DSM 816 / NCTC 3887 / NRRL 1 / QM 1276 / 107), this protein is Probable NAD(P)H-dependent D-xylose reductase xyl1 (xyl1).